A 31-amino-acid polypeptide reads, in one-letter code: Gamma-conotoxin-like As7a (31 aa).

Cystine bridges form between Cys2–Cys16, Cys9–Cys20, and Cys15–Cys31. Glu14 carries the 4-carboxyglutamate modification.

This sequence belongs to the conotoxin O1 superfamily. In terms of tissue distribution, expressed by the venom duct.

The protein localises to the secreted. Functionally, gamma-conotoxins may act on voltage-gated non-specific cation pacemaker channels (HCN). Elicits toxic effects in the freshwater snail Pomacea paludosa after intramuscular injection, but it has no effect when injected intracerebrally into mice. The sequence is that of Gamma-conotoxin-like As7a from Conus cancellatus (Cancellate cone).